The primary structure comprises 371 residues: MTFSPEPAYQHGHAPRTAILLVNLGTPDAPTPKAVGRYLKEFLSDPRVVEIPRAAWLPLLHGVILPLRSRASALKYESIWLREAHMTGSPLLVYSERQAHALQRLMNQHGHEVTVACAMRYGNPSIASVLEALRRQGCEQVLVLPMYPQYSGTTTATAFDEVFRVLGQWRNQPELRLVKHFHDHPAYISALHQQVGAYWARHGMPDFARGDKLILSFHGVPRRTLELGDPYHCECLKTGRLLGEALGLQPGQYQVTFQSRFGKAEWLQPYTAPTLAELGKVGAGRVDVFCPGFPADCIETLEEIAMEGQTEFKVAGGKDFHFIPCLNDADPWVAAMAEIALQHLQGWPLATPHPHELEARRTRAQTRGAAA.

Fe cation is bound by residues H218 and E299.

This sequence belongs to the ferrochelatase family.

Its subcellular location is the cytoplasm. The enzyme catalyses heme b + 2 H(+) = protoporphyrin IX + Fe(2+). It participates in porphyrin-containing compound metabolism; protoheme biosynthesis; protoheme from protoporphyrin-IX: step 1/1. Functionally, catalyzes the ferrous insertion into protoporphyrin IX. The sequence is that of Ferrochelatase from Cupriavidus necator (strain ATCC 17699 / DSM 428 / KCTC 22496 / NCIMB 10442 / H16 / Stanier 337) (Ralstonia eutropha).